Here is a 126-residue protein sequence, read N- to C-terminus: MATFKLVISDTKTGVAKQIEITGAEADKLIGLRIGDEIEAKELGFNLSEIFGSEIPGDVKLKITGGTDKDGFPMRPDVHGPRRVKILISRGPGFRPQERGERRKKTVRGNTISPEIAQINVKIVYP.

It belongs to the eukaryotic ribosomal protein eS6 family.

The protein is Small ribosomal subunit protein eS6 of Thermococcus sibiricus (strain DSM 12597 / MM 739).